Consider the following 384-residue polypeptide: Lipid-A-disaccharide synthase (384 aa).

Belongs to the LpxB family.

The enzyme catalyses a lipid X + a UDP-2-N,3-O-bis[(3R)-3-hydroxyacyl]-alpha-D-glucosamine = a lipid A disaccharide + UDP + H(+). It participates in bacterial outer membrane biogenesis; LPS lipid A biosynthesis. Condensation of UDP-2,3-diacylglucosamine and 2,3-diacylglucosamine-1-phosphate to form lipid A disaccharide, a precursor of lipid A, a phosphorylated glycolipid that anchors the lipopolysaccharide to the outer membrane of the cell. This chain is Lipid-A-disaccharide synthase, found in Gloeothece citriformis (strain PCC 7424) (Cyanothece sp. (strain PCC 7424)).